Consider the following 75-residue polypeptide: Small ribosomal subunit protein bS18 (75 aa).

This sequence belongs to the bacterial ribosomal protein bS18 family. As to quaternary structure, part of the 30S ribosomal subunit. Forms a tight heterodimer with protein bS6.

Binds as a heterodimer with protein bS6 to the central domain of the 16S rRNA, where it helps stabilize the platform of the 30S subunit. This Clostridioides difficile (strain 630) (Peptoclostridium difficile) protein is Small ribosomal subunit protein bS18.